Here is a 380-residue protein sequence, read N- to C-terminus: Protein Wnt-5a (380 aa).

Positions 1 to 35 (MKKSIGILSPGVALGMAGSAMSSKFFLVALAIFFS) are cleaved as a signal peptide. Residues 36 to 61 (FAQVVIEANSWWSLGMNNPVQMSEVY) constitute a propeptide that is removed on maturation. Cys104 and Cys115 are joined by a disulfide. N-linked (GlcNAc...) asparagine glycosylation is found at Asn114 and Asn120. Intrachain disulfides connect Cys154–Cys162, Cys164–Cys182, Cys238–Cys252, Cys240–Cys247, Cys309–Cys340, Cys325–Cys335, Cys339–Cys379, Cys355–Cys370, Cys357–Cys367, and Cys362–Cys363. Residue Ser244 is the site of O-palmitoleoyl serine; by PORCN attachment. 2 N-linked (GlcNAc...) asparagine glycosylation sites follow: Asn312 and Asn326.

This sequence belongs to the Wnt family. In terms of assembly, forms a soluble 1:1 complex with AFM; this prevents oligomerization and is required for prolonged biological activity. The complex with AFM may represent the physiological form in body fluids. Homooligomer; disulfide-linked, leading to inactivation (in vitro). Interacts with PORCN. Interacts with WLS. Interacts with glypican GCP3. Interacts with PKD1 (via extracellular domain). Interacts with TMEM67. In terms of processing, glycosylation is necessary for secretion but not for activity. Palmitoleoylation is required for efficient binding to frizzled receptors. Depalmitoleoylation leads to Wnt signaling pathway inhibition. Post-translationally, proteolytic processing by TIKI1 and TIKI2 promotes oxidation and formation of large disulfide-bond oligomers, leading to inactivation of WNT5A. Expression is increased in differentiated thyroid carcinomas compared to normal thyroid tissue and anaplastic thyroid tumors where expression is low or undetectable. Expression is found in thyrocytes but not in stromal cells (at protein level). Detected in neonate heart and lung.

It localises to the secreted. The protein localises to the extracellular space. The protein resides in the extracellular matrix. Functionally, ligand for members of the frizzled family of seven transmembrane receptors. Can activate or inhibit canonical Wnt signaling, depending on receptor context. In the presence of FZD4, activates beta-catenin signaling. In the presence of ROR2, inhibits the canonical Wnt pathway by promoting beta-catenin degradation through a GSK3-independent pathway which involves down-regulation of beta-catenin-induced reporter gene expression. Suppression of the canonical pathway allows chondrogenesis to occur and inhibits tumor formation. Stimulates cell migration. Decreases proliferation, migration, invasiveness and clonogenicity of carcinoma cells and may act as a tumor suppressor. Mediates motility of melanoma cells. Required during embryogenesis for extension of the primary anterior-posterior axis and for outgrowth of limbs and the genital tubercle. Inhibits type II collagen expression in chondrocytes. The protein is Protein Wnt-5a (WNT5A) of Homo sapiens (Human).